Consider the following 664-residue polypeptide: Macoilin (664 aa).

4 helical membrane passes run 28–48 (TFLY…DFVL), 75–95 (AFSV…LLFI), 120–140 (VCLP…AIRF), and 154–174 (FAAH…KSYV). The span at 253–265 (REKGKEKDKDAKK) shows a compositional bias: basic and acidic residues. Positions 253-274 (REKGKEKDKDAKKHNLGINNNN) are disordered. Position 305 is a phosphoserine (Ser-305). A compositionally biased stretch (polar residues) spans 320–348 (KNYKNASGVVNSSPRSHSATNGSIPSSSS). Positions 320–375 (KNYKNASGVVNSSPRSHSATNGSIPSSSSKNEKKQKCTSKGPSAHKDLMENCIPNN) are disordered. Asn-324 is a glycosylation site (N-linked (GlcNAc...) asparagine). Ser-332 bears the Phosphoserine mark. 2 N-linked (GlcNAc...) asparagine glycosylation sites follow: Asn-340 and Asn-452. A disordered region spans residues 630–664 (TSPLSPVSPHYSSKFVETSPSGLDPNASVYQPLKK). A phosphoserine mark is found at Ser-631 and Ser-634. The N-linked (GlcNAc...) asparagine glycan is linked to Asn-655.

This sequence belongs to the macoilin family. Strong expression in whole nervous system up to 12.5 dpc. Highly expressed in all neuronal differentiation fields from 14.5 dpc to birth, with highest expression in the telencephalic cortical plate and mitral cells in the olfactory bulb, and lower expression in neuronal progenitor zones. Progressively decreased expression in fields of neuron precursor proliferation from 14.5 dpc and virtually undetectable there by 17.5 dpc. No significant expression detected outside the nervous system. After birth, significant expression remains in the cerebellum, olfactory bulb and hippocampus.

It localises to the rough endoplasmic reticulum membrane. The protein localises to the nucleus membrane. Functionally, plays a role in the regulation of neuronal activity. In Mus musculus (Mouse), this protein is Macoilin (Maco1).